The primary structure comprises 153 residues: Putative tRNA (cytidine(34)-2'-O)-methyltransferase (153 aa).

3 residues coordinate S-adenosyl-L-methionine: G102, I122, and S131.

It belongs to the class IV-like SAM-binding methyltransferase superfamily. RNA methyltransferase TrmH family. TrmL subfamily.

The protein localises to the cytoplasm. It carries out the reaction cytidine(34) in tRNA + S-adenosyl-L-methionine = 2'-O-methylcytidine(34) in tRNA + S-adenosyl-L-homocysteine + H(+). The catalysed reaction is 5-carboxymethylaminomethyluridine(34) in tRNA(Leu) + S-adenosyl-L-methionine = 5-carboxymethylaminomethyl-2'-O-methyluridine(34) in tRNA(Leu) + S-adenosyl-L-homocysteine + H(+). Its function is as follows. Could methylate the ribose at the nucleotide 34 wobble position in tRNA. This chain is Putative tRNA (cytidine(34)-2'-O)-methyltransferase, found in Synechocystis sp. (strain ATCC 27184 / PCC 6803 / Kazusa).